The chain runs to 408 residues: Argininosuccinate synthase (408 aa).

Residues 10-18 and A37 each bind ATP; that span reads AYSGGLDTS. Positions 90 and 95 each coordinate L-citrulline. An ATP-binding site is contributed by G120. Residues T122, N126, and D127 each contribute to the L-aspartate site. L-citrulline is bound at residue N126. L-citrulline is bound by residues R130, S182, S191, E267, and Y279.

The protein belongs to the argininosuccinate synthase family. Type 1 subfamily. As to quaternary structure, homotetramer.

Its subcellular location is the cytoplasm. The catalysed reaction is L-citrulline + L-aspartate + ATP = 2-(N(omega)-L-arginino)succinate + AMP + diphosphate + H(+). It functions in the pathway amino-acid biosynthesis; L-arginine biosynthesis; L-arginine from L-ornithine and carbamoyl phosphate: step 2/3. The chain is Argininosuccinate synthase from Paraburkholderia phytofirmans (strain DSM 17436 / LMG 22146 / PsJN) (Burkholderia phytofirmans).